A 103-amino-acid chain; its full sequence is uncharacterized protein (103 aa).

This is an uncharacterized protein from Mycoplasma pneumoniae (strain ATCC 29342 / M129 / Subtype 1) (Mycoplasmoides pneumoniae).